Consider the following 258-residue polypeptide: Probable phthiotriol/phenolphthiotriol dimycocerosates methyltransferase 2 (258 aa).

The protein belongs to the methyltransferase superfamily. Phthiotriol/phenolphthiotriol dimycocerosates methyltransferase family.

Catalyzes the methylation of the lipid moiety of the intermediate compounds phthiotriol and glycosylated phenolphthiotriol dimycoserosates to form phthiocerol dimycocerosates (DIM A) and glycosylated phenolphthiocerol dimycocerosates (PGL). In Mycobacterium ulcerans (strain Agy99), this protein is Probable phthiotriol/phenolphthiotriol dimycocerosates methyltransferase 2.